The chain runs to 121 residues: MIQQESYLSVADNSGAKRIQCIRVLGTNRRYAHVGDVIVAAVKDAMPNMGVKKSDVVKAVVVRTKATLRRDTGNSIRFDDNAAVIINADNNPKGTRVFGPVARELRERNFTKIVSLAPEVI.

Belongs to the universal ribosomal protein uL14 family. In terms of assembly, part of the 50S ribosomal subunit. Forms a cluster with proteins L3 and L19. In the 70S ribosome, L14 and L19 interact and together make contacts with the 16S rRNA in bridges B5 and B8.

In terms of biological role, binds to 23S rRNA. Forms part of two intersubunit bridges in the 70S ribosome. The polypeptide is Large ribosomal subunit protein uL14 (Parasynechococcus marenigrum (strain WH8102)).